The sequence spans 105 residues: Protamine-2 (105 aa).

A disordered region spans residues 1 to 74 (MVRYRMRSPS…RRSCRRRRRH (74 aa)). A phosphoserine mark is found at Ser8, Ser10, and Ser33. Basic and acidic residues predominate over residues 33 to 42 (SPERVEDYGR). Positions 43-74 (THRGHHRHRRCSRKRLHRIHKRRRSCRRRRRH) are enriched in basic residues.

The protein belongs to the protamine P2 family. Interacts with TDRP. Proteolytic processing into mature chains is required for histone eviction during spermatogenesis. Transition proteins (TNP1 and TNP2) are required for processing. Testis.

Its subcellular location is the nucleus. The protein localises to the chromosome. Protamines substitute for histones in the chromatin of sperm during the haploid phase of spermatogenesis. They compact sperm DNA into a highly condensed, stable and inactive complex. The sequence is that of Protamine-2 (Prm2) from Rattus fuscipes (Bush rat).